A 211-amino-acid polypeptide reads, in one-letter code: Protein-L-isoaspartate O-methyltransferase (211 aa).

The active site involves Ser60.

This sequence belongs to the methyltransferase superfamily. L-isoaspartyl/D-aspartyl protein methyltransferase family.

It localises to the cytoplasm. It carries out the reaction [protein]-L-isoaspartate + S-adenosyl-L-methionine = [protein]-L-isoaspartate alpha-methyl ester + S-adenosyl-L-homocysteine. In terms of biological role, catalyzes the methyl esterification of L-isoaspartyl residues in peptides and proteins that result from spontaneous decomposition of normal L-aspartyl and L-asparaginyl residues. It plays a role in the repair and/or degradation of damaged proteins. The protein is Protein-L-isoaspartate O-methyltransferase of Ectopseudomonas mendocina (strain ymp) (Pseudomonas mendocina).